Consider the following 464-residue polypeptide: Argininosuccinate lyase (464 aa).

The protein belongs to the lyase 1 family. Argininosuccinate lyase subfamily.

Its subcellular location is the cytoplasm. The enzyme catalyses 2-(N(omega)-L-arginino)succinate = fumarate + L-arginine. It functions in the pathway amino-acid biosynthesis; L-arginine biosynthesis; L-arginine from L-ornithine and carbamoyl phosphate: step 3/3. This Pseudomonas putida (strain W619) protein is Argininosuccinate lyase.